A 182-amino-acid polypeptide reads, in one-letter code: UPF0397 protein BCQ_2505 (182 aa).

5 helical membrane passes run 9-29, 40-60, 71-91, 114-134, and 142-162; these read VVAI…GFSI, AILT…IGLI, WGIW…MGFI, ITGL…DIIV, and IVIQ…VLGL.

Belongs to the UPF0397 family.

It is found in the cell membrane. The polypeptide is UPF0397 protein BCQ_2505 (Bacillus cereus (strain Q1)).